Here is a 419-residue protein sequence, read N- to C-terminus: Hyaluronidase-3 (419 aa).

A signal peptide spans 1 to 16; the sequence is MTMQLGLALVLGVAMC. 5 disulfides stabilise this stretch: C42–C331, C205–C220, C356–C367, C361–C395, and C397–C406. N-linked (GlcNAc...) asparagine glycosylation occurs at N69. E129 serves as the catalytic Proton donor. A glycan (N-linked (GlcNAc...) asparagine) is linked at N215. The 56-residue stretch at 352-407 folds into the EGF-like domain; the sequence is AAMACSHQRCHGHGRCAWQDPGQLKVFLHLHPGGSPGAWESFSCRCYWGWAGPTCQ.

It belongs to the glycosyl hydrolase 56 family. Post-translationally, N-glycosylated. As to expression, highly expressed in bladder, spleen and liver. Expressed at low levels in the kidney.

It localises to the secreted. The protein localises to the cell membrane. Its subcellular location is the cytoplasmic vesicle. It is found in the secretory vesicle. The protein resides in the acrosome. It localises to the endoplasmic reticulum. The protein localises to the early endosome. The catalysed reaction is Random hydrolysis of (1-&gt;4)-linkages between N-acetyl-beta-D-glucosamine and D-glucuronate residues in hyaluronate.. Its function is as follows. Facilitates sperm penetration into the layer of cumulus cells surrounding the egg by digesting hyaluronic acid. Involved in induction of the acrosome reaction in the sperm. Involved in follicular atresia, the breakdown of immature ovarian follicles that are not selected to ovulate. Induces ovarian granulosa cell apoptosis, possibly via apoptotic signaling pathway involving CASP8 and CASP3 activation, and poly(ADP-ribose) polymerase (PARP) cleavage. Has no hyaluronidase activity in embryonic fibroblasts in vitro. Has no hyaluronidase activity in granulosa cells in vitro. This is Hyaluronidase-3 (HYAL3) from Sus scrofa (Pig).